A 324-amino-acid polypeptide reads, in one-letter code: NADH-ubiquinone oxidoreductase chain 1 (324 aa).

8 consecutive transmembrane segments (helical) span residues 9 to 29, 76 to 96, 106 to 126, 146 to 166, 177 to 197, 228 to 248, 259 to 279, and 299 to 319; these read LINP…LTLL, LFLV…APMP, LGVL…LGSG, ISYE…WGGY, ALWL…STLA, LLFL…AILF, ELTT…FLWV, and FLPL…AFAG.

Belongs to the complex I subunit 1 family.

The protein localises to the mitochondrion inner membrane. The enzyme catalyses a ubiquinone + NADH + 5 H(+)(in) = a ubiquinol + NAD(+) + 4 H(+)(out). Core subunit of the mitochondrial membrane respiratory chain NADH dehydrogenase (Complex I) that is believed to belong to the minimal assembly required for catalysis. Complex I functions in the transfer of electrons from NADH to the respiratory chain. The immediate electron acceptor for the enzyme is believed to be ubiquinone. The chain is NADH-ubiquinone oxidoreductase chain 1 (MT-ND1) from Formosania lacustris (Oriental stream loach).